The following is a 340-amino-acid chain: Cysteinyl leukotriene receptor 1 (340 aa).

Residues 1–31 (MDETGNPTIPPASNNTCYDSIDDFRNQVYST) are Extracellular-facing. Residue Asn-14 is glycosylated (N-linked (GlcNAc...) asparagine). The chain crosses the membrane as a helical span at residues 32–52 (LYSMISVVGFFGNGFVLYVLV). Residues 53–60 (KTYHEKSA) lie on the Cytoplasmic side of the membrane. A helical transmembrane segment spans residues 61-81 (FQVYMINLAVADLLCVCTLPL). Topologically, residues 82–109 (RVAYYVHKGIWLFGDFLCRLSTYALYVN) are extracellular. Cys-99 and Cys-176 are oxidised to a cystine. A helical transmembrane segment spans residues 110–130 (LYCSIFFMTAMSFFRCVAIVF). At 131–144 (PVQNISLVTQKKAR) the chain is on the cytoplasmic side. A helical membrane pass occupies residues 145–165 (LVCIAIWMFVILTSSPFLMAN). The Extracellular segment spans residues 166 to 196 (TYKDEKNNTKCFEPPQDNQAKNYVLILHYVS). Residue Asn-172 is glycosylated (N-linked (GlcNAc...) asparagine). A helical membrane pass occupies residues 197–217 (LFIGFIIPFITIIVCYTMIIF). The Cytoplasmic portion of the chain corresponds to 218–233 (TLLKSSMKKNLSSRKR). A helical transmembrane segment spans residues 234 to 254 (AIGMIIVVTAAFLVSFMPYHI). Residues 255 to 279 (QRTIHLHFLHNKTKPCDSILRMQKS) lie on the Extracellular side of the membrane. N-linked (GlcNAc...) asparagine glycosylation is present at Asn-265. A helical membrane pass occupies residues 280 to 300 (VVITLSLAASNCCFDPLLYFF). Topologically, residues 301-340 (SGGNFRRRLSTIRKYSLSSMTYIPKKKTSLPQKGKDICKE) are cytoplasmic.

It belongs to the G-protein coupled receptor 1 family.

It is found in the cell membrane. Functionally, receptor for cysteinyl leukotrienes mediating bronchoconstriction of individuals with and without asthma. Stimulation by LTD4 results in the contraction and proliferation of smooth muscle, edema, eosinophil migration and damage to the mucus layer in the lung. This response is mediated via a G-protein that activates a phosphatidylinositol-calcium second messenger system. The protein is Cysteinyl leukotriene receptor 1 (CYSLTR1) of Cavia porcellus (Guinea pig).